We begin with the raw amino-acid sequence, 168 residues long: Phosphopantetheine adenylyltransferase (168 aa).

A substrate-binding site is contributed by Thr13. ATP is bound by residues Thr13–Phe14 and His21. The substrate site is built by Lys45, Leu78, and Arg92. ATP-binding positions include Gly93–Arg95, Glu103, and Thr128–Ser134.

This sequence belongs to the bacterial CoaD family. In terms of assembly, homohexamer. Mg(2+) serves as cofactor.

Its subcellular location is the cytoplasm. It catalyses the reaction (R)-4'-phosphopantetheine + ATP + H(+) = 3'-dephospho-CoA + diphosphate. The protein operates within cofactor biosynthesis; coenzyme A biosynthesis; CoA from (R)-pantothenate: step 4/5. Its function is as follows. Reversibly transfers an adenylyl group from ATP to 4'-phosphopantetheine, yielding dephospho-CoA (dPCoA) and pyrophosphate. This Wolbachia pipientis wMel protein is Phosphopantetheine adenylyltransferase.